Consider the following 243-residue polypeptide: Triosephosphate isomerase (243 aa).

9–11 (NWK) contacts substrate. The active-site Electrophile is H96. E165 acts as the Proton acceptor in catalysis. Substrate is bound by residues G171, S204, and 225–226 (GG).

This sequence belongs to the triosephosphate isomerase family. As to quaternary structure, homodimer.

The protein resides in the cytoplasm. The catalysed reaction is D-glyceraldehyde 3-phosphate = dihydroxyacetone phosphate. The protein operates within carbohydrate biosynthesis; gluconeogenesis. It participates in carbohydrate degradation; glycolysis; D-glyceraldehyde 3-phosphate from glycerone phosphate: step 1/1. Involved in the gluconeogenesis. Catalyzes stereospecifically the conversion of dihydroxyacetone phosphate (DHAP) to D-glyceraldehyde-3-phosphate (G3P). This chain is Triosephosphate isomerase, found in Prochlorococcus marinus (strain MIT 9211).